A 332-amino-acid polypeptide reads, in one-letter code: Ribosomal RNA small subunit methyltransferase H (332 aa).

Residues 38–40 (GGY), Asp56, Phe83, Asp104, and Gln111 each bind S-adenosyl-L-methionine. The interval 309 to 332 (TETPFSEDISRPDTHIPRSRRQSA) is disordered.

Belongs to the methyltransferase superfamily. RsmH family.

Its subcellular location is the cytoplasm. The catalysed reaction is cytidine(1402) in 16S rRNA + S-adenosyl-L-methionine = N(4)-methylcytidine(1402) in 16S rRNA + S-adenosyl-L-homocysteine + H(+). Specifically methylates the N4 position of cytidine in position 1402 (C1402) of 16S rRNA. The protein is Ribosomal RNA small subunit methyltransferase H of Zymomonas mobilis subsp. mobilis (strain ATCC 31821 / ZM4 / CP4).